An 82-amino-acid polypeptide reads, in one-letter code: Small ribosomal subunit protein eS21 (82 aa).

It belongs to the eukaryotic ribosomal protein eS21 family.

In Oryza sativa subsp. japonica (Rice), this protein is Small ribosomal subunit protein eS21 (RPS21).